Reading from the N-terminus, the 219-residue chain is Cytidylate kinase (219 aa).

21-29 (GPAASGKGT) is a binding site for ATP.

The protein belongs to the cytidylate kinase family. Type 1 subfamily.

Its subcellular location is the cytoplasm. The catalysed reaction is CMP + ATP = CDP + ADP. It catalyses the reaction dCMP + ATP = dCDP + ADP. This is Cytidylate kinase from Rickettsia akari (strain Hartford).